The chain runs to 340 residues: Glyceraldehyde-3-phosphate dehydrogenase (340 aa).

NAD(+) is bound by residues 12-13 (RI), D40, K85, and S128. D-glyceraldehyde 3-phosphate-binding positions include 158–160 (SCT), T189, R204, 217–218 (TG), and R240. The active-site Nucleophile is the C159. K257 is covalently cross-linked (Isoglutamyl lysine isopeptide (Lys-Gln) (interchain with Q-Cter in protein Pup)). An NAD(+)-binding site is contributed by N321.

It belongs to the glyceraldehyde-3-phosphate dehydrogenase family. Homotetramer.

The protein localises to the cytoplasm. The enzyme catalyses D-glyceraldehyde 3-phosphate + phosphate + NAD(+) = (2R)-3-phospho-glyceroyl phosphate + NADH + H(+). The protein operates within carbohydrate degradation; glycolysis; pyruvate from D-glyceraldehyde 3-phosphate: step 1/5. Functionally, catalyzes the oxidative phosphorylation of glyceraldehyde 3-phosphate (G3P) to 1,3-bisphosphoglycerate (BPG) using the cofactor NAD. The first reaction step involves the formation of a hemiacetal intermediate between G3P and a cysteine residue, and this hemiacetal intermediate is then oxidized to a thioester, with concomitant reduction of NAD to NADH. The reduced NADH is then exchanged with the second NAD, and the thioester is attacked by a nucleophilic inorganic phosphate to produce BPG. This Mycolicibacterium smegmatis (strain ATCC 700084 / mc(2)155) (Mycobacterium smegmatis) protein is Glyceraldehyde-3-phosphate dehydrogenase (gapA).